Here is a 1032-residue protein sequence, read N- to C-terminus: Vacuolar membrane protease (1032 aa).

Residues 1-11 (MRFQNPFAFRP) lie on the Cytoplasmic side of the membrane. Residues 12 to 32 (GPVSFWTTVIYLALVIPLIYV) form a helical membrane-spanning segment. Residues 33 to 426 (HETVPPAPSD…AWAVFALRGL (394 aa)) are Vacuolar-facing. Residues Asn-50 and Asn-142 are each glycosylated (N-linked (GlcNAc...) asparagine). 2 residues coordinate Zn(2+): His-207 and Asp-219. Residue Glu-253 is the Proton acceptor of the active site. Glu-254, Glu-279, and His-352 together coordinate Zn(2+). A helical transmembrane segment spans residues 427–447 (FAWSLTLLVATPLILVAITYI). At 448 to 482 (LARKDKYYFFSRDIKMHHDINDDPVVLGGWKGFLR) the chain is on the cytoplasmic side. Residues 483–503 (FPFALVFAGALTIASTLLLAK) form a helical membrane-spanning segment. Residues 504-511 (FNPLIIYS) lie on the Vacuolar side of the membrane. The chain crosses the membrane as a helical span at residues 512–532 (SPYAVWSMTLSIFYFSFWLIM). At 533–545 (RGASFIRPSALHR) the chain is on the cytoplasmic side. Residues 546-566 (GYVLIWLFALGWGLQVVGAVA) traverse the membrane as a helical segment. Residues 567 to 573 (EDRLHIA) are Vacuolar-facing. Residues 574–594 (ALYATVFLQSAVFLALFISLL) form a helical membrane-spanning segment. The Cytoplasmic portion of the chain corresponds to 595–708 (EQFALLGKHD…WSGRLPSWTW (114 aa)). The span at 616-631 (RDISSHGTDHESRPQP) shows a compositional bias: basic and acidic residues. Positions 616–666 (RDISSHGTDHESRPQPEEEPAQPEGDEDESEDATETTPLRANEPGYGSSTR) are disordered. Residues 632 to 649 (EEEPAQPEGDEDESEDAT) show a composition bias toward acidic residues. A helical transmembrane segment spans residues 709–729 (IIQFLLLAPVPVILFGNLGLV). The Vacuolar portion of the chain corresponds to 730–745 (AMSALQMTGTDGGSLL). The chain crosses the membrane as a helical span at residues 746 to 766 (VPVLTLGIVSIFLLLPLTPFI). The Cytoplasmic segment spans residues 767–773 (HRVSHHV). A helical membrane pass occupies residues 774-794 (PMFLLCVFAGTFIYNLVAFPF). Topologically, residues 795-1032 (SDSHRFKFYF…LVEVRKTYKV (238 aa)) are vacuolar. 2 N-linked (GlcNAc...) asparagine glycosylation sites follow: Asn-812 and Asn-884.

It belongs to the peptidase M28 family. Zn(2+) serves as cofactor.

Its subcellular location is the vacuole membrane. In terms of biological role, may be involved in vacuolar sorting and osmoregulation. This chain is Vacuolar membrane protease, found in Fusarium vanettenii (strain ATCC MYA-4622 / CBS 123669 / FGSC 9596 / NRRL 45880 / 77-13-4) (Fusarium solani subsp. pisi).